A 271-amino-acid polypeptide reads, in one-letter code: Norsolorinic acid ketoreductase (271 aa).

The segment at 1–22 (MNGSLSQHDQERLSTPYRDGPP) is disordered. Residues Ile-36, Asn-112, Tyr-185, Lys-189, Val-216, and Thr-218 each contribute to the NADP(+) site. Tyr-185 (proton donor) is an active-site residue. The Lowers pKa of active site Tyr role is filled by Lys-189.

The protein belongs to the short-chain dehydrogenases/reductases (SDR) family.

The protein resides in the cytoplasm. It is found in the cytosol. Its subcellular location is the vacuole. It carries out the reaction (1'S)-averantin + NADP(+) = norsolorinic acid + NADPH + H(+). It participates in mycotoxin biosynthesis; aflatoxin biosynthesis. In terms of biological role, norsolorinic acid ketoreductase; part of the gene cluster that mediates the biosynthesis of aflatoxins, a group of polyketide-derived furanocoumarins, and part of the most toxic and carcinogenic compounds among the known mycotoxins. The four major aflatoxins produced by A.parasiticus are aflatoxin B1 (AFB1), aflatoxin B2 (AFB2), aflatoxin G1 (AFG1) and aflatoxin G2 (AFG2). Within the aflatoxin pathway, the norsolorinic acid ketoreductase aflD performs the second step by catalyzing the dehydration of norsolorinic acid (NOR) to form (1'S)-averantin (AVN). The biosynthesis of aflatoxins begins with the norsolorinic acid synthase aflC that combines a hexanoyl starter unit produced by the fatty acid synthase aflA/aflB and 7 malonyl-CoA extender units to synthesize the precursor NOR. The second step is the conversion of NOR to averantin and requires the norsolorinic acid ketoreductase aflD, which catalyzes the dehydration of norsolorinic acid to form (1'S)-averantin. The norsolorinic acid reductases aflE and aflF may also play a role in the conversion of NOR to AVN. The cytochrome P450 monooxygenase aflG then catalyzes the hydroxylation of AVN to 5'hydroxyaverantin (HAVN). The next step is performed by the 5'-hydroxyaverantin dehydrogenase aflH that transforms HAVN to 5'-oxoaverantin (OAVN) which is further converted to averufin (AVF) by aflK that plays a dual role in the pathway, as a 5'-oxoaverantin cyclase that mediates conversion of 5'-oxoaverantin, as well as a versicolorin B synthase in a later step in the pathway. The averufin oxidase aflI catalyzes the conversion of AVF to versiconal hemiacetal acetate (VHA). VHA is then the substrate for the versiconal hemiacetal acetate esterase aflJ to yield versiconal (VAL). Versicolorin B synthase aflK then converts VAL to versicolorin B (VERB) by closing the bisfuran ring of aflatoxin which is required for DNA-binding, thus giving to aflatoxin its activity as a mutagen. Then, the activity of the versicolorin B desaturase aflL leads to versicolorin A (VERA). A branch point starts from VERB since it can also be converted to dihydrodemethylsterigmatocystin (DMDHST), probably also by aflL, VERA being a precursor for aflatoxins B1 and G1, and DMDHST for aflatoxins B2 and G2. Next, the versicolorin reductase aflM and the cytochrome P450 monooxygenase aflN are involved in conversion of VERA to demethylsterigmatocystin (DMST). AflX and aflY seem also involved in this step, through probable aflX-mediated epoxide ring-opening step following versicolorin A oxidation and aflY-mediated Baeyer-Villiger oxidation required for the formation of the xanthone ring. The methyltransferase aflO then leads to the modification of DMST to sterigmatocystin (ST), and of DMDHST to dihydrosterigmatocystin (DHST). Both ST and DHST are then substrates of the O-methyltransferase aflP to yield O-methylsterigmatocystin (OMST) and dihydro-O-methylsterigmatocystin (DHOMST), respectively. Finally OMST is converted to aflatoxins B1 and G1, and DHOMST to aflatoxins B2 and G2, via the action of several enzymes including O-methylsterigmatocystin oxidoreductase aflQ, the cytochrome P450 monooxygenase aflU, but also the NADH-dependent flavin oxidoreductase nadA which is specifically required for the synthesis of AFG1. The sequence is that of Norsolorinic acid ketoreductase from Aspergillus parasiticus (strain ATCC 56775 / NRRL 5862 / SRRC 143 / SU-1).